The primary structure comprises 146 residues: MHPKRKKRLLIVLAGLAVVAVASGLILNAFRSNLVFFHTPTEIAAGQVDTDRVIRVGGLVEAGSVEREPGGLRVRFVITDTARSVPVRYEGILPDLFREGHGTVVQGRIGTDGVLAATQVLAKHDENYMPPEAADAIQRAGETVVQ.

The Cytoplasmic portion of the chain corresponds to methionine 1–arginine 8. A helical; Signal-anchor for type II membrane protein membrane pass occupies residues leucine 9–alanine 29. Topologically, residues phenylalanine 30–glutamine 146 are periplasmic. Heme-binding residues include histidine 124 and tyrosine 128.

It belongs to the CcmE/CycJ family.

Its subcellular location is the cell inner membrane. Heme chaperone required for the biogenesis of c-type cytochromes. Transiently binds heme delivered by CcmC and transfers the heme to apo-cytochromes in a process facilitated by CcmF and CcmH. The chain is Cytochrome c-type biogenesis protein CcmE from Laribacter hongkongensis (strain HLHK9).